A 530-amino-acid chain; its full sequence is Phosphoenolpyruvate carboxykinase (ATP) (530 aa).

Residues R60, Y195, and K201 each contribute to the substrate site. ATP contacts are provided by residues K201, H221, and 237-245; that span reads GLSGTGKTT. The Mn(2+) site is built by K201 and H221. Position 258 (D258) interacts with Mn(2+). 3 residues coordinate ATP: E286, R324, and S449. R324 is a binding site for substrate.

This sequence belongs to the phosphoenolpyruvate carboxykinase (ATP) family. The cofactor is Mn(2+).

Its subcellular location is the cytoplasm. The enzyme catalyses oxaloacetate + ATP = phosphoenolpyruvate + ADP + CO2. It functions in the pathway carbohydrate biosynthesis; gluconeogenesis. Its function is as follows. Involved in the gluconeogenesis. Catalyzes the conversion of oxaloacetate (OAA) to phosphoenolpyruvate (PEP) through direct phosphoryl transfer between the nucleoside triphosphate and OAA. The chain is Phosphoenolpyruvate carboxykinase (ATP) from Geobacter metallireducens (strain ATCC 53774 / DSM 7210 / GS-15).